The sequence spans 159 residues: 2-C-methyl-D-erythritol 2,4-cyclodiphosphate synthase (159 aa).

A divalent metal cation contacts are provided by D10 and H12. Residues 10 to 12 (DVH) and 37 to 38 (HS) each bind 4-CDP-2-C-methyl-D-erythritol 2-phosphate. Position 45 (H45) interacts with a divalent metal cation. Residues 59–61 (DIG), 64–68 (FPDTD), 103–109 (AQAPKML), 135–138 (TTTE), F142, and R145 contribute to the 4-CDP-2-C-methyl-D-erythritol 2-phosphate site.

This sequence belongs to the IspF family. Homotrimer. The cofactor is a divalent metal cation.

It carries out the reaction 4-CDP-2-C-methyl-D-erythritol 2-phosphate = 2-C-methyl-D-erythritol 2,4-cyclic diphosphate + CMP. Its pathway is isoprenoid biosynthesis; isopentenyl diphosphate biosynthesis via DXP pathway; isopentenyl diphosphate from 1-deoxy-D-xylulose 5-phosphate: step 4/6. Involved in the biosynthesis of isopentenyl diphosphate (IPP) and dimethylallyl diphosphate (DMAPP), two major building blocks of isoprenoid compounds. Catalyzes the conversion of 4-diphosphocytidyl-2-C-methyl-D-erythritol 2-phosphate (CDP-ME2P) to 2-C-methyl-D-erythritol 2,4-cyclodiphosphate (ME-CPP) with a corresponding release of cytidine 5-monophosphate (CMP). The polypeptide is 2-C-methyl-D-erythritol 2,4-cyclodiphosphate synthase (Francisella tularensis subsp. novicida (strain U112)).